The chain runs to 211 residues: Dual specificity phosphatase 29 (211 aa).

The region spanning 47–192 (HVNEVWPGIY…LRTLDIQLAI (146 aa)) is the Tyrosine-protein phosphatase domain. 136 to 143 (HCAMGRSR) provides a ligand contact to substrate. Residue Cys-137 is the Phosphocysteine intermediate of the active site.

It belongs to the protein-tyrosine phosphatase family. Non-receptor class dual specificity subfamily.

The protein localises to the cytoplasm. The protein resides in the nucleus. It catalyses the reaction O-phospho-L-tyrosyl-[protein] + H2O = L-tyrosyl-[protein] + phosphate. The enzyme catalyses O-phospho-L-seryl-[protein] + H2O = L-seryl-[protein] + phosphate. It carries out the reaction O-phospho-L-threonyl-[protein] + H2O = L-threonyl-[protein] + phosphate. Its function is as follows. Dual specificity phosphatase able to dephosphorylate phosphotyrosine, phosphoserine and phosphothreonine residues within the same substrate, with a preference for phosphotyrosine as a substrate. Involved in the modulation of AMPK and MAPK1/2 signaling pathways. This is Dual specificity phosphatase 29 (dusp29) from Callorhinchus milii (Ghost shark).